Consider the following 66-residue polypeptide: Alpha-conotoxin Vc1a (66 aa).

Residues 1-25 (MGMRMMFTVFLLVVLATTVVSSTSG) form the signal peptide. Positions 26–47 (RREFRGRNAAAKASDLVSLTDK) are excised as a propeptide. Intrachain disulfides connect cysteine 51–cysteine 57 and cysteine 52–cysteine 65. The tract at residues 53 to 55 (SDP) is ser-Xaa-Pro motif, crucial for potent interaction with nAChR. Key region for inhibition of alpha-9-alpha-10/CHRNA9-CHRNA10 nAChR regions lie at residues 54 to 56 (DPR) and 60 to 64 (DHPEI). Proline 55 is modified (4-hydroxyproline). A 4-carboxyglutamate modification is found at glutamate 63. Cysteine amide is present on cysteine 65.

This sequence belongs to the conotoxin A superfamily. Post-translationally, vc1.1 is described as having no post-translational modifications (except C-terminal amidation), whereas Vc1a contains a hydroxyproline at Pro-55 and a 4-carboxyglutamate at Glu-63 (and a C-terminal amidation). Hydroxylation of Pro-55 is not important for inhibition of alpha-9-alpha-10/CHRNA9-CHRNA10 nAChRs, since [P6O]Vc1.1 (Pro-55 hydroxylated) shows similar inhibition than native toxin (IC(50)=99.1 nM). In contrast, hydroxylation of Pro-55 seems to impair inhibition of HVA calcium channel currents, since [P6O]Vc1.1 has no effect on HVA calcium channel currents. In vivo, hydroxylation of Pro-55 seems to induce the loss of analgesic effects in rat models of neuropathic pain, since [P6O]Vc1.1 has no effect on mechanical allodynia. In terms of processing, gamma-carboxylation of Glu-63 is not important for inhibition of alpha-9-alpha-10/CHRNA9-CHRNA10 nAChRs, since [E14gamma]Vc1.1 (carboxyglutamate at Glu-63) shows similar inhibition than native toxin (IC(50)=65.3 nM). In contrast, gamma-carboxylation of Glu-63 seems to impair inhibition of HVA calcium channel currents, since [E14gamma]Vc1.1 has no effect on HVA calcium channel currents. Post-translationally, non-native isomers 'ribbon' (with disulfide connectivity C1-C4; C2-C3) and 'beads' (with disulfide connectivity C1-C2; C3-C4) of Vc1.1 also inhibit HVA calcium channel currents in rat DRG neurons (20-30% inhibition at 1 uM toxin). It has been shown that both reduced and alkylated Vc1.1 have no effect on HVA calcium channel currents. The observed activity can be attributed to specific isomers. [C3S]Vc1.1(1-8) mutant is C-terminally amidated. Expressed by the venom duct.

The protein resides in the secreted. In terms of biological role, alpha-conotoxins act on postsynaptic membranes, they bind to the nicotinic acetylcholine receptors (nAChR) and thus inhibit them. This toxin (native toxin Vc1a; hydroxylated and gamma-carboxylated) blocks alpha-9-alpha-10/CHRNA9-CHRNA10 nAChRs (IC(50)=62.9 nM). In contrast to the non-post-translationally modified analog Vc1.1, Vc1a does not inhibit high voltage-activated (HVA) calcium channel currents. In vivo, in contrast to Vc1.1, Vc1a does not show analgesic effects in rat models of neuropathic pain. Functionally, the synthetic peptide Vc1.1 (a non-hydroxylated and non-gamma-carboxylated analog of Vc1a) has two types of targets. It blocks alpha-9-alpha-10/CHRNA9-CHRNA10 nAChRs (on rat receptors, IC(50)=19-109 nM) (with preference for rat over human receptors) and inhibits high voltage-activated (HVA) calcium channel (Cav2.2, Cav2.3) currents by acting on GABA(B) receptors (GABBR1 and GABBR2) (IC(50)=1.7 nM). It also shows moderate inhibition on alpha-6/alpha-3-beta-2-beta-3 (CHRNA6/CHRNA3-CHRNB2-CHRNB3) (IC(50)=140 nM) and alpha-6/alpha-3-beta-4 (CHRNA6/CHRNA3-CHRNB4) (IC(50)=980 nM). On alpha-9-alpha-10/CHRNA9-CHRNA10 nAChR, it most likely interacts with the alpha-10(+)/alpha-9(-)interface of the receptor. In vivo, it acts as a powerful analgesic in rat models of neuropathic pain. In Conus victoriae (Queen Victoria cone), this protein is Alpha-conotoxin Vc1a.